The chain runs to 181 residues: Adenylyl-sulfate kinase (181 aa).

20–27 provides a ligand contact to ATP; sequence GLSGAGKS. Ser94 (phosphoserine intermediate) is an active-site residue.

It belongs to the APS kinase family.

It catalyses the reaction adenosine 5'-phosphosulfate + ATP = 3'-phosphoadenylyl sulfate + ADP + H(+). It participates in sulfur metabolism; hydrogen sulfide biosynthesis; sulfite from sulfate: step 2/3. Functionally, catalyzes the synthesis of activated sulfate. This is Adenylyl-sulfate kinase from Deinococcus deserti (strain DSM 17065 / CIP 109153 / LMG 22923 / VCD115).